We begin with the raw amino-acid sequence, 150 residues long: MNEIRNIESDPIYRNRLANMLVDRILKNGKKSLAYQIFYQAMKRIRQKTNRNPLSVLRQAVRGVTPDVVTETKRVGGSTYRVPIEVVPAKGKALAIRWLLIACRKRSGRSMALRLSDELIDAARNSGSAIRKKEETHKVAEANKAFAHFR.

This sequence belongs to the universal ribosomal protein uS7 family. As to quaternary structure, part of the 30S ribosomal subunit.

It is found in the plastid. The protein resides in the chloroplast. Its function is as follows. One of the primary rRNA binding proteins, it binds directly to 16S rRNA where it nucleates assembly of the head domain of the 30S subunit. This chain is Small ribosomal subunit protein uS7cz/uS7cy (rps7-A), found in Adiantum capillus-veneris (Maidenhair fern).